Reading from the N-terminus, the 107-residue chain is Precursor of CEP14 (107 aa).

Positions 1–21 (MAVRLIPTIWLFIVFAVIVSA) are cleaved as a signal peptide. Residues 22 to 92 (LPSLVSSRKL…GKLRSRHLST (71 aa)) constitute a propeptide that is removed on maturation. A glycan (N-linked (GlcNAc...) asparagine) is linked at Asn39. The segment at 43-76 (REEEKSHMPHVTKTSTLSALPKGKIPNSTPSKKG) is disordered. Hydroxyproline is present on residues Pro101 and Pro103.

Belongs to the C-terminally encoded plant signaling peptide (CEP) family. Interacts with CEP receptors (e.g. CEPR1 and CEPR2). In terms of processing, the mature small signaling peptide is generated by proteolytic processing of the longer precursor.

It is found in the secreted. The protein localises to the extracellular space. It localises to the apoplast. In terms of biological role, extracellular signaling peptide that may regulate primary root growth rate and systemic nitrogen (N)-demand signaling. The sequence is that of Precursor of CEP14 from Arabidopsis thaliana (Mouse-ear cress).